Here is an 885-residue protein sequence, read N- to C-terminus: Leucine--tRNA ligase (885 aa).

The 'HIGH' region signature appears at Pro-48–His-58. The 'KMSKS' region motif lies at Thr-639–Ser-643. Lys-642 lines the ATP pocket.

Belongs to the class-I aminoacyl-tRNA synthetase family.

It localises to the cytoplasm. It carries out the reaction tRNA(Leu) + L-leucine + ATP = L-leucyl-tRNA(Leu) + AMP + diphosphate. The chain is Leucine--tRNA ligase from Bordetella bronchiseptica (strain ATCC BAA-588 / NCTC 13252 / RB50) (Alcaligenes bronchisepticus).